The primary structure comprises 84 residues: DNA-directed RNA polymerase subunit Rpo5 (84 aa).

It belongs to the archaeal Rpo5/eukaryotic RPB5 RNA polymerase subunit family. As to quaternary structure, part of the 13-subunit RNA polymerase complex.

The protein resides in the cytoplasm. The catalysed reaction is RNA(n) + a ribonucleoside 5'-triphosphate = RNA(n+1) + diphosphate. In terms of biological role, DNA-dependent RNA polymerase (RNAP) catalyzes the transcription of DNA into RNA using the four ribonucleoside triphosphates as substrates. The protein is DNA-directed RNA polymerase subunit Rpo5 of Saccharolobus solfataricus (strain ATCC 35092 / DSM 1617 / JCM 11322 / P2) (Sulfolobus solfataricus).